Consider the following 343-residue polypeptide: MEVNHWIAMADCFFVTGGTGFVGANLVRHLLEQGYQVRALVRASSRPDNLQNLPIDWVVGDLNDGDLHQQMQGCQGLFHVAAHYSLWQKDREALYRSNVLGTRNILACAQKAGIERTVYTSSVAAIGVKGDGQRADESYQSPVEKLIGAYKQSKYWAEQEALTAAQQGQDIVIVNPSTPIGPWDIKPTPTGEIILRFLRRQMPAYVNTGLNLIDVRDVAAGHLLAWQRGKTALTRGDRYILGHENISLQGILAHLSTITGLPAPKNTVPLWLPLTFAWVEEKVLAPLGRSPSVPMDGVKMSAQEMYYDASKAVQELGLPQSSIKQALADAVHWFQNHGYVKTQ.

Tyr150 serves as a coordination point for NADP(+).

The protein belongs to the NAD(P)-dependent epimerase/dehydratase family. Dihydroflavonol-4-reductase subfamily.

The enzyme catalyses a (2R,3S,4S)-leucoanthocyanidin + NADP(+) = a (2R,3R)-dihydroflavonol + NADPH + H(+). It participates in secondary metabolite biosynthesis; flavonoid biosynthesis. This Synechocystis sp. (strain ATCC 27184 / PCC 6803 / Kazusa) protein is Putative dihydroflavonol 4-reductase (dfrA).